Reading from the N-terminus, the 306-residue chain is Beta-lactamase 1 (306 aa).

The N-terminal stretch at 1-43 is a signal peptide; sequence MKNKRMLKIGMCVGILGLSVTSLEAFTGGALQVEAKEKTGQVK. S89 serves as the catalytic Acyl-ester intermediate. The active-site Proton acceptor is the E185. 251–253 is a substrate binding site; that stretch reads KSG.

It belongs to the class-A beta-lactamase family.

The enzyme catalyses a beta-lactam + H2O = a substituted beta-amino acid. In terms of biological role, this protein is a beta-lactamase with a substrate specificity for penicillins. The chain is Beta-lactamase 1 (blaCI) from Bacillus mycoides.